Here is a 333-residue protein sequence, read N- to C-terminus: MSGVKVRREDAKKVLELLKSVGILDGKRKAIRDEKYVIFPVTDTNIAKSLGLEVVDVELPMRPERQIYKNLEDLLPREIFKKLGRLDIVGDIAIVSIPDEILSEREVIVSAIRKLYPKVKVIARRGFHSGLYRIRELEVIWGENRLHTIHKENGVLIKVDLSKVFFNPRMKGERYRIAQLVNDGERILVPFAGVIPYPLVIARFKNVEVYAVEINEFAVKLAEENLELNRDRLKGKIKIIHGDVFEVLPNLPNFDRVVSPTPKGVDALSLTLSKAEKFLHYYDFVHESEIERFRERVLEECRRQGKECRVSVRKVSDYKPHVYKVCADVEILS.

S-adenosyl-L-methionine-binding positions include Arg-174, Phe-191, 213–214, and 243–244; these read EI and DV.

The protein belongs to the class I-like SAM-binding methyltransferase superfamily. TRM5/TYW2 family.

It localises to the cytoplasm. It catalyses the reaction guanosine(37) in tRNA + S-adenosyl-L-methionine = N(1)-methylguanosine(37) in tRNA + S-adenosyl-L-homocysteine + H(+). It carries out the reaction 4-demethylwyosine(37) in tRNA(Phe) + S-adenosyl-L-methionine = isowyosine(37) in tRNA(Phe) + S-adenosyl-L-homocysteine + H(+). Catalyzes both the N1-methylation of guanosine and the C7-methylation of 4-demethylwyosine (imG-14) at position 37 in tRNA(Phe). The sequence is that of tRNA (guanine(37)-N(1))/4-demethylwyosine(37)-methyltransferase Taw22 from Pyrococcus abyssi (strain GE5 / Orsay).